Reading from the N-terminus, the 1027-residue chain is A-factor-processing enzyme (1027 aa).

Histidine 118 lines the Zn(2+) pocket. The Proton acceptor role is filled by glutamate 121. Positions 122 and 199 each coordinate Zn(2+).

It belongs to the peptidase M16 family. Requires Zn(2+) as cofactor.

The protein resides in the membrane. Its activity is regulated as follows. Inhibited by chelating agents like EDTA, TPEN and 1,1-phenanthroline, as well as NEM, free cysteine and DTT. Its function is as follows. Involved in the N-terminal endoproteolytic cleavage of the P2 precursor of the a-factor mating pheromone. Capable of proteolysing the established mammalian insulin-degrading enzymes (IDEs) substrates amyloid-beta peptide and insulin B-chain. This is A-factor-processing enzyme (STE23) from Saccharomyces cerevisiae (strain ATCC 204508 / S288c) (Baker's yeast).